The chain runs to 778 residues: Protein translocase subunit SecA 2 (778 aa).

Residues Gln-94, 112–116 (GEGKT), and Asp-501 contribute to the ATP site.

The protein belongs to the SecA family. In terms of assembly, monomer and homodimer. Part of the essential Sec protein translocation apparatus which comprises SecA, SecYEG and auxiliary proteins SecDF. Other proteins may also be involved.

It localises to the cell membrane. It is found in the cytoplasm. The catalysed reaction is ATP + H2O + cellular proteinSide 1 = ADP + phosphate + cellular proteinSide 2.. Its function is as follows. Part of the Sec protein translocase complex. Interacts with the SecYEG preprotein conducting channel. Has a central role in coupling the hydrolysis of ATP to the transfer of proteins into and across the cell membrane, serving as an ATP-driven molecular motor driving the stepwise translocation of polypeptide chains across the membrane. This chain is Protein translocase subunit SecA 2, found in Mycobacterium leprae (strain TN).